A 366-amino-acid polypeptide reads, in one-letter code: Putative type II methyltransferase M.MjaORF1200P (366 aa).

Residues 5–366 (LKFIDLFCGC…IARVIKENLK (362 aa)) form the SAM-dependent MTase C5-type domain. The active site involves C133.

Belongs to the class I-like SAM-binding methyltransferase superfamily. C5-methyltransferase family.

It carries out the reaction a 2'-deoxycytidine in DNA + S-adenosyl-L-methionine = a 5-methyl-2'-deoxycytidine in DNA + S-adenosyl-L-homocysteine + H(+). Its function is as follows. A putative methylase that probably protects DNA from cleavage by the MjaORF1200P endonuclease. The polypeptide is Putative type II methyltransferase M.MjaORF1200P (Methanocaldococcus jannaschii (strain ATCC 43067 / DSM 2661 / JAL-1 / JCM 10045 / NBRC 100440) (Methanococcus jannaschii)).